A 447-amino-acid chain; its full sequence is Clusterin (447 aa).

A signal peptide spans methionine 1–glycine 21. Positions lysine 77 to lysine 80 match the Nuclear localization signal motif. 5 disulfide bridges follow: cysteine 101–cysteine 312, cysteine 112–cysteine 304, cysteine 115–cysteine 301, cysteine 120–cysteine 294, and cysteine 128–cysteine 284. Asparagine 102 carries an N-linked (GlcNAc...) asparagine glycan. Residue serine 132 is modified to Phosphoserine. 5 N-linked (GlcNAc...) asparagine glycosylation sites follow: asparagine 144, asparagine 290, asparagine 327, asparagine 353, and asparagine 373. Position 394 is a phosphoserine (serine 394). The Nuclear localization signal signature appears at arginine 441–arginine 445.

This sequence belongs to the clusterin family. In terms of assembly, antiparallel disulfide-linked heterodimer of an alpha chain and a beta chain. Self-associates and forms higher oligomers. Interacts with a broad range of misfolded proteins, including APP, APOC2 and LYZ. Slightly acidic pH promotes interaction with misfolded proteins. Forms high-molecular weight oligomers upon interaction with misfolded proteins. Interacts with APOA1, LRP2, CLUAP1 and PON1. Interacts with the complement membrane attack complex. Interacts (via alpha chain) with XRCC6. Interacts with SYVN1, COMMD1, BTRC, CUL1 and with ubiquitin and SCF (SKP1-CUL1-F-box protein) E3 ubiquitin-protein ligase complexes. Interacts (via alpha chain) with BAX in stressed cells, where BAX undergoes a conformation change leading to association with the mitochondrial membrane. Does not interact with BAX in unstressed cells. Found in a complex with LTF, CLU, EPPIN and SEMG1. Interacts (immaturely glycosylated pre-secreted form) with HSPA5; this interaction promotes CLU stability and facilitates stress-induced CLU retrotranslocation from the secretory pathway to the mitochondria, thereby reducing stress-induced apoptosis by stabilizing mitochondrial membrane integrity. Interacts with BCL2L1; this interaction releases and activates BAX and promotes cell death. Interacts with TGFBR2 and ACVR1. Interacts (secreted form) with STMN3; this interaction may act as an important modulator during neuronal differentiation. Interacts with VLDLR and LRP8. Post-translationally, proteolytically cleaved on its way through the secretory system, probably within the Golgi lumen. Proteolytic cleavage is not necessary for its chaperone activity. All non-secreted forms are not proteolytically cleaved. Chaperone activity of uncleaved forms is dependent on a non-reducing environment. Polyubiquitinated, leading to proteasomal degradation. Under cellular stress, the intracellular level of cleaved form is reduced due to proteasomal degradation. In terms of processing, extensively glycosylated with sulfated N-linked carbohydrates. About 30% of the protein mass is comprised of complex N-linked carbohydrate. Endoplasmic reticulum (ER) stress induces changes in glycosylation status and increases level of hypoglycosylated forms. Core carbohydrates are essential for chaperone activity. Non-secreted forms are hypoglycosylated or unglycosylated. As to expression, detected in Sertoli cells (at protein level). Detected in cultured Sertoli cells, testis, epididymis, liver and brain.

It is found in the secreted. It localises to the nucleus. The protein localises to the cytoplasm. Its subcellular location is the mitochondrion membrane. The protein resides in the cytosol. It is found in the microsome. It localises to the endoplasmic reticulum. The protein localises to the mitochondrion. Its subcellular location is the perinuclear region. The protein resides in the cytoplasmic vesicle. It is found in the secretory vesicle. It localises to the chromaffin granule. Functionally, functions as extracellular chaperone that prevents aggregation of non native proteins. Prevents stress-induced aggregation of blood plasma proteins. Inhibits formation of amyloid fibrils by APP, APOC2, B2M, CALCA, CSN3, SNCA and aggregation-prone LYZ variants (in vitro). Does not require ATP. Maintains partially unfolded proteins in a state appropriate for subsequent refolding by other chaperones, such as HSPA8/HSC70. Does not refold proteins by itself. Binding to cell surface receptors triggers internalization of the chaperone-client complex and subsequent lysosomal or proteasomal degradation. When secreted, protects cells against apoptosis and against cytolysis by complement: inhibits assembly of the complement membrane attack complex (MAC) by preventing polymerization of C9 pore component of the MAC complex. Intracellular forms interact with ubiquitin and SCF (SKP1-CUL1-F-box protein) E3 ubiquitin-protein ligase complexes and promote the ubiquitination and subsequent proteasomal degradation of target proteins. Promotes proteasomal degradation of COMMD1 and IKBKB. Modulates NF-kappa-B transcriptional activity. Following stress, promotes apoptosis. Inhibits apoptosis when associated with the mitochondrial membrane by interference with BAX-dependent release of cytochrome c into the cytoplasm. Plays a role in the regulation of cell proliferation. An intracellular form suppresses stress-induced apoptosis by stabilizing mitochondrial membrane integrity through interaction with HSPA5. Secreted form does not affect caspase or BAX-mediated intrinsic apoptosis and TNF-induced NF-kappa-B-activity. Secreted form act as an important modulator during neuronal differentiation through interaction with STMN3. Plays a role in the clearance of immune complexes that arise during cell injury. The chain is Clusterin from Rattus norvegicus (Rat).